The following is a 125-amino-acid chain: uncharacterized protein (125 aa).

Disordered stretches follow at residues 1–27 (MNKT…GSSS) and 76–125 (NKNN…RFKK). Over residues 18–27 (GMNSTTGSSS) the composition is skewed to low complexity.

This is an uncharacterized protein from Dictyostelium discoideum (Social amoeba).